The primary structure comprises 155 residues: Large ribosomal subunit protein uL22c (155 aa).

It belongs to the universal ribosomal protein uL22 family. Part of the 50S ribosomal subunit.

It localises to the plastid. It is found in the chloroplast. Its function is as follows. This protein binds specifically to 23S rRNA. The globular domain of the protein is located near the polypeptide exit tunnel on the outside of the subunit, while an extended beta-hairpin is found that lines the wall of the exit tunnel in the center of the 70S ribosome. The sequence is that of Large ribosomal subunit protein uL22c (rpl22) from Nicotiana sylvestris (Wood tobacco).